We begin with the raw amino-acid sequence, 164 residues long: Peptidyl-prolyl cis-trans isomerase A (164 aa).

Position 1 is an N-acetylmethionine (Met-1). Position 2 is an N-acetylvaline; in Peptidyl-prolyl cis-trans isomerase A, N-terminally processed (Val-2). The 157-residue stretch at 7–163 (FFDITADGEP…KKITISDCGQ (157 aa)) folds into the PPIase cyclophilin-type domain. Lys-28 carries the post-translational modification N6-acetyllysine; alternate. Residue Lys-28 forms a Glycyl lysine isopeptide (Lys-Gly) (interchain with G-Cter in SUMO2); alternate linkage. Residue Lys-28 forms a Glycyl lysine isopeptide (Lys-Gly) (interchain with G-Cter in ubiquitin); alternate linkage. An N6-acetyllysine mark is found at Lys-44 and Lys-76. At Ser-77 the chain carries Phosphoserine. At Lys-82 the chain carries N6-acetyllysine; alternate. Lys-82 is covalently cross-linked (Glycyl lysine isopeptide (Lys-Gly) (interchain with G-Cter in SUMO2); alternate). Phosphothreonine is present on Thr-93. A glycan (N-linked (GlcNAc...) asparagine) is linked at Asn-108. N6-acetyllysine is present on residues Lys-125, Lys-131, and Lys-133.

The protein belongs to the cyclophilin-type PPIase family. PPIase A subfamily. In terms of assembly, interacts with protein phosphatase PPP3CA/calcineurin A. Interacts with isoform 2 of BSG/CD147. Interacts with FOXO1; the interaction promotes FOXO1 dephosphorylation, nuclear accumulation and transcriptional activity. Interacts with integrin ITGA2B:ITGB3; the interaction is ROS and peptidyl-prolyl cis-trans isomerase (PPIase) activity-dependent and is increased in the presence of thrombin. Interacts with MAP3K5. Interacts with TARDBP; the interaction is dependent on the RNA-binding activity of TARDBP and the PPIase activity of PPIA/CYPA and the acetylation of PPIA/CYPA at Lys-125 favors the interaction. Interacts with HNRNPA1, HNRNPA2B1, HNRNPC, RBMX, HNRNPK and HNRNPM. Post-translationally, acetylation at Lys-125 markedly inhibits catalysis of cis to trans isomerization. PPIA acetylation also antagonizes the immunosuppressive effects of cyclosporine by inhibiting the sequential steps of cyclosporine binding and calcineurin inhibition. Acetylation at Lys-125 favors the interaction with TARDBP.

It is found in the cytoplasm. The protein resides in the secreted. The protein localises to the nucleus. The enzyme catalyses [protein]-peptidylproline (omega=180) = [protein]-peptidylproline (omega=0). With respect to regulation, binds cyclosporin A (CsA). CsA mediates some of its effects via an inhibitory action on PPIase. Catalyzes the cis-trans isomerization of proline imidic peptide bonds in oligopeptides. Exerts a strong chemotactic effect on leukocytes partly through activation of one of its membrane receptors BSG/CD147, initiating a signaling cascade that culminates in MAPK/ERK activation. Activates endothelial cells (ECs) in a proinflammatory manner by stimulating activation of NF-kappa-B and ERK, JNK and p38 MAP-kinases and by inducing expression of adhesion molecules including SELE and VCAM1. Induces apoptosis in ECs by promoting the FOXO1-dependent expression of CCL2 and BCL2L11 which are involved in EC chemotaxis and apoptosis. In response to oxidative stress, initiates proapoptotic and antiapoptotic signaling in ECs via activation of NF-kappa-B and AKT1 and up-regulation of antiapoptotic protein BCL2. Negatively regulates MAP3K5/ASK1 kinase activity, autophosphorylation and oxidative stress-induced apoptosis mediated by MAP3K5/ASK1. Necessary for the assembly of TARDBP in heterogeneous nuclear ribonucleoprotein (hnRNP) complexes and regulates TARDBP binding to RNA UG repeats and TARDBP-dependent expression of HDAC6, ATG7 and VCP which are involved in clearance of protein aggregates. Plays an important role in platelet activation and aggregation. Regulates calcium mobilization and integrin ITGA2B:ITGB3 bidirectional signaling via increased ROS production as well as by facilitating the interaction between integrin and the cell cytoskeleton. Binds heparan sulfate glycosaminoglycans. The chain is Peptidyl-prolyl cis-trans isomerase A (Ppia) from Rattus norvegicus (Rat).